The sequence spans 2517 residues: Protein capicua homolog (2517 aa).

6 disordered regions span residues 1–197 (MKPM…SGSY), 300–325 (LSPG…HREP), 342–483 (PWEP…KYKK), 531–579 (EMEG…RGDS), 608–640 (SSRS…FGFR), and 658–767 (VRSR…FRAV). Residues 57–67 (EEAEEGEEEEA) show a composition bias toward acidic residues. A compositionally biased stretch (basic and acidic residues) spans 91 to 101 (EDPKGDGEAGR). 2 stretches are compositionally biased toward low complexity: residues 158–167 (TSTRSSSTDT) and 300–313 (LSPG…LPGS). Basic and acidic residues predominate over residues 396-405 (HCEEGEEKHP). The segment covering 414–428 (LPLPPPQLLSPPPKS) has biased composition (pro residues). The span at 451 to 477 (GSRSSSVASLEKGTAPAARARTPLTAA) shows a compositional bias: low complexity. Positions 608–619 (SSRSGTPSFSPV) are enriched in polar residues. Pro residues predominate over residues 677–686 (DLGPHPPPPA). Residues 698-707 (TFQTNLTFTV) are compositionally biased toward polar residues. Residues 726–735 (GAPGAGGGGA) show a composition bias toward gly residues. Residues serine 776 and serine 780 each carry the phosphoserine modification. 7 disordered regions span residues 812 to 842 (IVRN…PGRG), 955 to 1110 (PSQP…DHIR), 1179 to 1220 (CNKD…APGV), 1235 to 1274 (SDTK…SLDG), 1290 to 1347 (SGPA…TSDE), 1379 to 1539 (RVTD…ILQT), and 1595 to 1628 (IASK…RVPG). An interaction with ATXN1 region spans residues 937–955 (EPRSVAVFPWHSLVPFLAP). Positions 959-981 (DPSVQPSEAQQPASHPVASNQSK) are enriched in polar residues. Residues serine 1055 and serine 1082 each carry the phosphoserine modification. 3 stretches are compositionally biased toward basic and acidic residues: residues 1087–1110 (PKER…DHIR), 1179–1188 (CNKDRKKSSS), and 1200–1209 (GHKETRERSM). Arginine 1099 is modified (omega-N-methylarginine). A DNA-binding region (HMG box) is located at residues 1109–1177 (IRRPMNAFMI…AHFKAHPDWK (69 aa)). Serine 1186 carries the post-translational modification Phosphoserine. Residues 1235-1245 (SDTKAPGSSSC) show a composition bias toward polar residues. Residue serine 1271 is modified to Phosphoserine. The span at 1305–1323 (GAPGPFAAPGEGGALAATG) shows a compositional bias: low complexity. Residues serine 1340, serine 1345, and serine 1405 each carry the phosphoserine modification. The segment covering 1418–1430 (PLDPEPPGPPDPP) has biased composition (pro residues). The segment covering 1439–1456 (SAPSSSASSPASSSASAA) has biased composition (low complexity). Over residues 1457–1474 (TSFSLGSGTFKAQESGQG) the composition is skewed to polar residues. Phosphoserine occurs at positions 1609, 1630, and 1648. At arginine 1772 the chain carries Asymmetric dimethylarginine. The interval 1799-1818 (QSVPSAPPPKAQSVSPVQAP) is disordered. Omega-N-methylarginine is present on arginine 1843. Disordered stretches follow at residues 2039-2064 (AATI…FPSA), 2100-2342 (SFEA…AKCE), and 2430-2517 (AATP…ATGR). Low complexity predominate over residues 2051–2064 (ATATPAPTSPFPSA). 2 stretches are compositionally biased toward pro residues: residues 2110–2119 (GPAPRQPLEP) and 2136–2145 (PTPPAPPPLP). A compositionally biased stretch (low complexity) spans 2146–2155 (ETWTPTARSS). Lysine 2177 is subject to N6-acetyllysine. Residues 2198-2209 (PPTPPSPAPAPA) are compositionally biased toward pro residues. Threonine 2200 is modified (phosphothreonine). Serine 2203 is modified (phosphoserine). The span at 2210 to 2225 (VAPGGSSESSSGRAAG) shows a compositional bias: low complexity. Residues 2249–2278 (KTFDSVDNRVLSEVDFEERFAELPEFRPEE) are compositionally biased toward basic and acidic residues. 6 positions are modified to phosphoserine: serine 2260, serine 2282, serine 2287, serine 2291, serine 2298, and serine 2306. Threonine 2307 bears the Phosphothreonine mark. Phosphoserine occurs at positions 2311 and 2318. Positions 2457 to 2469 (APTPSPAGGPDPT) are enriched in pro residues. Serine 2504 is subject to Phosphoserine.

Found in a complex with ATXN1 and ATXN1L. In terms of assembly, interacts with ATXN1. In terms of tissue distribution, expressed in fetal brain.

It is found in the nucleus. Functionally, transcriptional repressor which plays a role in development of the central nervous system (CNS). In concert with ATXN1 and ATXN1L, involved in brain development. The polypeptide is Protein capicua homolog (CIC) (Homo sapiens (Human)).